Reading from the N-terminus, the 30-residue chain is Scolopendra 20528.11 Da toxin (30 aa).

This sequence belongs to the CRISP family. Venom allergen 5-like subfamily. In terms of processing, contains 3 disulfide bonds. In terms of tissue distribution, expressed by the venom gland.

It is found in the secreted. The polypeptide is Scolopendra 20528.11 Da toxin (Scolopendra angulata (Barbados giant red centipede)).